The primary structure comprises 156 residues: Cyanate hydratase (156 aa).

Residues Arg-96, Glu-99, and Ser-122 contribute to the active site.

Belongs to the cyanase family.

The catalysed reaction is cyanate + hydrogencarbonate + 3 H(+) = NH4(+) + 2 CO2. Functionally, catalyzes the reaction of cyanate with bicarbonate to produce ammonia and carbon dioxide. The sequence is that of Cyanate hydratase from Pseudomonas putida (strain W619).